Consider the following 264-residue polypeptide: Glutamate racemase (264 aa).

Substrate-binding positions include 10–11 (DS) and 42–43 (YG). Catalysis depends on C73, which acts as the Proton donor/acceptor. 74–75 (NT) lines the substrate pocket. Residue C181 is the Proton donor/acceptor of the active site. 182–183 (TH) contributes to the substrate binding site.

This sequence belongs to the aspartate/glutamate racemases family.

It carries out the reaction L-glutamate = D-glutamate. It functions in the pathway cell wall biogenesis; peptidoglycan biosynthesis. Functionally, provides the (R)-glutamate required for cell wall biosynthesis. This is Glutamate racemase from Thermoanaerobacter sp. (strain X514).